The primary structure comprises 266 residues: tRNA pseudouridine synthase A (266 aa).

Residue aspartate 57 is the Nucleophile of the active site. Tyrosine 115 serves as a coordination point for substrate.

This sequence belongs to the tRNA pseudouridine synthase TruA family. As to quaternary structure, homodimer.

It carries out the reaction uridine(38/39/40) in tRNA = pseudouridine(38/39/40) in tRNA. In terms of biological role, formation of pseudouridine at positions 38, 39 and 40 in the anticodon stem and loop of transfer RNAs. The protein is tRNA pseudouridine synthase A of Buchnera aphidicola subsp. Acyrthosiphon pisum (strain APS) (Acyrthosiphon pisum symbiotic bacterium).